A 659-amino-acid polypeptide reads, in one-letter code: QWRF motif-containing protein 2 (659 aa).

Disordered stretches follow at residues M1–V125, S157–G221, D291–S317, R340–I359, and S371–N429. The span at S42–S72 shows a compositional bias: low complexity. A compositionally biased stretch (polar residues) spans R90–T102. The segment covering S172–K190 has biased composition (basic and acidic residues). Composition is skewed to polar residues over residues S206 to R216 and D291 to V303. Composition is skewed to low complexity over residues G345–I359 and A401–R418. The QWRF motif motif lies at Q468–F471.

The protein belongs to the QWRF family.

The polypeptide is QWRF motif-containing protein 2 (QWRF2) (Arabidopsis thaliana (Mouse-ear cress)).